Consider the following 400-residue polypeptide: Probable RNA polymerase sigma factor RfaY (400 aa).

The short motif at 62 to 75 is the Polymerase core binding element; the sequence is WQRLAQLHQPASFL. The H-T-H motif DNA-binding region spans 165-184; that stretch reads SDAAVRKRLSRARATVRNEL.

Belongs to the sigma-70 factor family. ECF subfamily.

Sigma factors are initiation factors that promote the attachment of RNA polymerase to specific initiation sites and are then released. This sigma factor is involved in lipopolysaccharide biosynthesis and pathogenicity. In Xanthomonas campestris pv. campestris (strain ATCC 33913 / DSM 3586 / NCPPB 528 / LMG 568 / P 25), this protein is Probable RNA polymerase sigma factor RfaY (rfaY).